The primary structure comprises 181 residues: Histone H1 (181 aa).

Disordered stretches follow at residues 1 to 23 and 81 to 181; these read MTET…THPP and TKGA…PKKK. Residues 8–19 show a composition bias toward basic residues; the sequence is KPKKVSKPKAKP. The H15 domain occupies 20 to 94; it reads THPPTSVMVM…GASGSFKLAA (75 aa). Composition is skewed to basic residues over residues 103–119 and 145–181; these read AVAK…KAAA and KPKK…PKKK.

It belongs to the histone H1/H5 family.

The protein resides in the nucleus. It localises to the chromosome. Its function is as follows. Histones H1 are necessary for the condensation of nucleosome chains into higher-order structures. In Tigriopus californicus (Marine copepod), this protein is Histone H1.